A 230-amino-acid polypeptide reads, in one-letter code: Orotidine 5'-phosphate decarboxylase (230 aa).

Substrate-binding positions include aspartate 10, lysine 31, 58-67, threonine 117, arginine 179, glutamine 188, glycine 208, and arginine 209; that span reads DLKLHDIPNT. Lysine 60 serves as the catalytic Proton donor.

This sequence belongs to the OMP decarboxylase family. Type 1 subfamily. Homodimer.

It catalyses the reaction orotidine 5'-phosphate + H(+) = UMP + CO2. It participates in pyrimidine metabolism; UMP biosynthesis via de novo pathway; UMP from orotate: step 2/2. In terms of biological role, catalyzes the decarboxylation of orotidine 5'-monophosphate (OMP) to uridine 5'-monophosphate (UMP). This is Orotidine 5'-phosphate decarboxylase from Staphylococcus aureus (strain Mu3 / ATCC 700698).